Consider the following 360-residue polypeptide: ACT1-like protein (360 aa).

Positions 339–360 (KKQSHNNANDHHEDSMNYSITQ) are disordered.

In terms of assembly, interacts with the receptor complex composed of ilcr-1 and ilcr-2. Also interacts with pik-1. Expressed in neurons.

Its function is as follows. May act as an adapter to facilitate downstream signaling for the receptor complex composed of ilcr-1 and ilcr-2, which is a signaling complex that modulates neuronal activity and animal behavior in response to sensory neuron input. This is ACT1-like protein from Caenorhabditis elegans.